The sequence spans 201 residues: Large ribosomal subunit protein uL18 (201 aa).

Belongs to the universal ribosomal protein uL18 family. In terms of assembly, part of the 50S ribosomal subunit. Contacts the 5S and 23S rRNAs.

In terms of biological role, this is one of the proteins that bind and probably mediate the attachment of the 5S RNA into the large ribosomal subunit, where it forms part of the central protuberance. The protein is Large ribosomal subunit protein uL18 of Thermococcus kodakarensis (strain ATCC BAA-918 / JCM 12380 / KOD1) (Pyrococcus kodakaraensis (strain KOD1)).